The chain runs to 490 residues: Betaine aldehyde dehydrogenase (490 aa).

Residues threonine 26, isoleucine 27, and aspartate 93 each coordinate K(+). 150–152 (GAW) serves as a coordination point for NAD(+). Lysine 162 (charge relay system) is an active-site residue. 176–179 (KPSE) is an NAD(+) binding site. Valine 180 is a binding site for K(+). 230 to 233 (GVAS) is an NAD(+) binding site. Residue leucine 246 coordinates K(+). Glutamate 252 acts as the Proton acceptor in catalysis. Positions 254, 286, and 387 each coordinate NAD(+). The active-site Nucleophile is cysteine 286. Cysteine 286 carries the post-translational modification Cysteine sulfenic acid (-SOH). Residues lysine 457 and glycine 460 each coordinate K(+). Glutamate 464 acts as the Charge relay system in catalysis.

It belongs to the aldehyde dehydrogenase family. Dimer of dimers. K(+) serves as cofactor.

The catalysed reaction is betaine aldehyde + NAD(+) + H2O = glycine betaine + NADH + 2 H(+). The protein operates within amine and polyamine biosynthesis; betaine biosynthesis via choline pathway; betaine from betaine aldehyde: step 1/1. Involved in the biosynthesis of the osmoprotectant glycine betaine. Catalyzes the irreversible oxidation of betaine aldehyde to the corresponding acid. The sequence is that of Betaine aldehyde dehydrogenase from Escherichia coli O157:H7.